A 157-amino-acid polypeptide reads, in one-letter code: SsrA-binding protein (157 aa).

The interval 133-157 is disordered; sequence LHDKRETEKKRDWSREKGRLLRARG. The segment covering 135–151 has biased composition (basic and acidic residues); that stretch reads DKRETEKKRDWSREKGR.

Belongs to the SmpB family.

Its subcellular location is the cytoplasm. In terms of biological role, required for rescue of stalled ribosomes mediated by trans-translation. Binds to transfer-messenger RNA (tmRNA), required for stable association of tmRNA with ribosomes. tmRNA and SmpB together mimic tRNA shape, replacing the anticodon stem-loop with SmpB. tmRNA is encoded by the ssrA gene; the 2 termini fold to resemble tRNA(Ala) and it encodes a 'tag peptide', a short internal open reading frame. During trans-translation Ala-aminoacylated tmRNA acts like a tRNA, entering the A-site of stalled ribosomes, displacing the stalled mRNA. The ribosome then switches to translate the ORF on the tmRNA; the nascent peptide is terminated with the 'tag peptide' encoded by the tmRNA and targeted for degradation. The ribosome is freed to recommence translation, which seems to be the essential function of trans-translation. The polypeptide is SsrA-binding protein (Bradyrhizobium diazoefficiens (strain JCM 10833 / BCRC 13528 / IAM 13628 / NBRC 14792 / USDA 110)).